The chain runs to 139 residues: ATP synthase epsilon chain (139 aa).

It belongs to the ATPase epsilon chain family. F-type ATPases have 2 components, CF(1) - the catalytic core - and CF(0) - the membrane proton channel. CF(1) has five subunits: alpha(3), beta(3), gamma(1), delta(1), epsilon(1). CF(0) has three main subunits: a, b and c.

Its subcellular location is the cell inner membrane. Functionally, produces ATP from ADP in the presence of a proton gradient across the membrane. The sequence is that of ATP synthase epsilon chain from Nitrosospira multiformis (strain ATCC 25196 / NCIMB 11849 / C 71).